Reading from the N-terminus, the 571-residue chain is Proline--tRNA ligase (571 aa).

It belongs to the class-II aminoacyl-tRNA synthetase family. ProS type 1 subfamily. As to quaternary structure, homodimer.

Its subcellular location is the cytoplasm. It catalyses the reaction tRNA(Pro) + L-proline + ATP = L-prolyl-tRNA(Pro) + AMP + diphosphate. In terms of biological role, catalyzes the attachment of proline to tRNA(Pro) in a two-step reaction: proline is first activated by ATP to form Pro-AMP and then transferred to the acceptor end of tRNA(Pro). As ProRS can inadvertently accommodate and process non-cognate amino acids such as alanine and cysteine, to avoid such errors it has two additional distinct editing activities against alanine. One activity is designated as 'pretransfer' editing and involves the tRNA(Pro)-independent hydrolysis of activated Ala-AMP. The other activity is designated 'posttransfer' editing and involves deacylation of mischarged Ala-tRNA(Pro). The misacylated Cys-tRNA(Pro) is not edited by ProRS. This is Proline--tRNA ligase from Pseudomonas putida (strain ATCC 47054 / DSM 6125 / CFBP 8728 / NCIMB 11950 / KT2440).